A 122-amino-acid chain; its full sequence is Large ribosomal subunit protein uL14 (122 aa).

Belongs to the universal ribosomal protein uL14 family. Part of the 50S ribosomal subunit. Forms a cluster with proteins L3 and L19. In the 70S ribosome, L14 and L19 interact and together make contacts with the 16S rRNA in bridges B5 and B8.

Functionally, binds to 23S rRNA. Forms part of two intersubunit bridges in the 70S ribosome. The sequence is that of Large ribosomal subunit protein uL14 from Ligilactobacillus salivarius (strain UCC118) (Lactobacillus salivarius).